A 180-amino-acid polypeptide reads, in one-letter code: Signal peptidase complex subunit 3 (180 aa).

The Cytoplasmic portion of the chain corresponds to 1 to 12; sequence MHNLLSRANALL. A helical; Signal-anchor for type II membrane protein membrane pass occupies residues 13–33; the sequence is AFTLWVMAAVTAACFLSTVFL. Topologically, residues 34-180 are lumenal; that stretch reads DYTVPTKLTV…PTTYTTTRRS (147 aa). A glycan (N-linked (GlcNAc...) asparagine) is linked at Asn141.

The protein belongs to the SPCS3 family. In terms of assembly, component of the signal peptidase complex (SPC) composed of a catalytic subunit sec-11 and three accessory subunits spcs-1, spcs-2 and spcs-3. The complex induces a local thinning of the ER membrane which is used to measure the length of the signal peptide (SP) h-region of protein substrates. This ensures the selectivity of the complex towards h-regions shorter than 18-20 amino acids.

It is found in the endoplasmic reticulum membrane. In terms of biological role, essential component of the signal peptidase complex (SPC) which catalyzes the cleavage of N-terminal signal sequences from nascent proteins as they are translocated into the lumen of the endoplasmic reticulum. Essential for the SPC catalytic activity, possibly by stabilizing and positioning the active center of the complex close to the lumenal surface. The chain is Signal peptidase complex subunit 3 from Caenorhabditis elegans.